Reading from the N-terminus, the 86-residue chain is Short neurotoxin homolog NTL1 (86 aa).

Residues 1 to 21 (MKTLLLSLVVLTIACLDLGYT) form the signal peptide. 4 disulfides stabilise this stretch: Cys-24–Cys-45, Cys-38–Cys-62, Cys-66–Cys-78, and Cys-79–Cys-84.

As to expression, expressed by the venom gland.

The protein resides in the secreted. In Bungarus multicinctus (Many-banded krait), this protein is Short neurotoxin homolog NTL1.